Consider the following 251-residue polypeptide: Flap endonuclease Xni (251 aa).

Position 104 (Asp104) interacts with Mg(2+). A 5'-3' exonuclease domain is found at 160-249 (VQPQQLPDYW…IDGNLQQLRL (90 aa)). 5 residues coordinate K(+): Leu171, Ala172, Pro180, Val182, and Ile185. Residues 184–189 (GIGPKS) form an interaction with DNA region.

Belongs to the Xni family. The cofactor is Mg(2+). K(+) is required as a cofactor.

Has flap endonuclease activity. During DNA replication, flap endonucleases cleave the 5'-overhanging flap structure that is generated by displacement synthesis when DNA polymerase encounters the 5'-end of a downstream Okazaki fragment. The protein is Flap endonuclease Xni of Escherichia coli O6:K15:H31 (strain 536 / UPEC).